The following is a 433-amino-acid chain: 3-phosphoshikimate 1-carboxyvinyltransferase (433 aa).

Residues lysine 23, serine 24, and arginine 28 each contribute to the 3-phosphoshikimate site. Position 23 (lysine 23) interacts with phosphoenolpyruvate. Phosphoenolpyruvate-binding residues include glycine 93 and arginine 121. 4 residues coordinate 3-phosphoshikimate: serine 167, glutamine 169, aspartate 318, and lysine 345. Position 169 (glutamine 169) interacts with phosphoenolpyruvate. Aspartate 318 functions as the Proton acceptor in the catalytic mechanism. 2 residues coordinate phosphoenolpyruvate: arginine 349 and arginine 390.

This sequence belongs to the EPSP synthase family. As to quaternary structure, monomer.

It is found in the cytoplasm. The catalysed reaction is 3-phosphoshikimate + phosphoenolpyruvate = 5-O-(1-carboxyvinyl)-3-phosphoshikimate + phosphate. It functions in the pathway metabolic intermediate biosynthesis; chorismate biosynthesis; chorismate from D-erythrose 4-phosphate and phosphoenolpyruvate: step 6/7. Its function is as follows. Catalyzes the transfer of the enolpyruvyl moiety of phosphoenolpyruvate (PEP) to the 5-hydroxyl of shikimate-3-phosphate (S3P) to produce enolpyruvyl shikimate-3-phosphate and inorganic phosphate. This is 3-phosphoshikimate 1-carboxyvinyltransferase from Nitratiruptor sp. (strain SB155-2).